We begin with the raw amino-acid sequence, 232 residues long: Large ribosomal subunit protein uL1 (232 aa).

Belongs to the universal ribosomal protein uL1 family. As to quaternary structure, part of the 50S ribosomal subunit.

In terms of biological role, binds directly to 23S rRNA. The L1 stalk is quite mobile in the ribosome, and is involved in E site tRNA release. Its function is as follows. Protein L1 is also a translational repressor protein, it controls the translation of the L11 operon by binding to its mRNA. The sequence is that of Large ribosomal subunit protein uL1 from Paraburkholderia phymatum (strain DSM 17167 / CIP 108236 / LMG 21445 / STM815) (Burkholderia phymatum).